A 380-amino-acid polypeptide reads, in one-letter code: L-prolyl-[peptidyl-carrier protein] dehydrogenase (380 aa).

Glu-243 functions as the Proton acceptor in the catalytic mechanism. Residues Arg-269 and Gln-280 each contribute to the FAD site.

This sequence belongs to the acyl-CoA dehydrogenase family. Requires FAD as cofactor.

The enzyme catalyses L-prolyl-[peptidyl-carrier protein] + 2 oxidized [electron-transfer flavoprotein] + H(+) = (1H-pyrrole-2-carbonyl)-[peptidyl-carrier protein] + 2 reduced [electron-transfer flavoprotein]. In terms of biological role, involved in the biosynthesis of pyoluteorin. Catalyzes the desaturation of the L-prolyl-[PltL] to yield 1H-pyrrole-2-carbonyl-[PltL]. In Pseudomonas fluorescens (strain ATCC BAA-477 / NRRL B-23932 / Pf-5), this protein is L-prolyl-[peptidyl-carrier protein] dehydrogenase.